An 80-amino-acid polypeptide reads, in one-letter code: Bacteriochlorophyll c-binding protein (80 aa).

Histidine 25 lines the a bacteriochlorophyll c pocket. The interval 49-80 is disordered; the sequence is PGVSRSGSGEGAFSSSPSNGFRPKRIRSRFNR. The propeptide occupies 54 to 80; the sequence is SGSGEGAFSSSPSNGFRPKRIRSRFNR. Over residues 70-80 the composition is skewed to basic residues; it reads RPKRIRSRFNR.

This sequence belongs to the BChl C/E-binding protein family.

Its subcellular location is the chlorosome. The protein localises to the chlorosome envelope. Its function is as follows. Component of the photosynthetic apparatus. The light harvesting B740 complex binds bacteriochlorophyll c. This Chloroflexus aurantiacus (strain ATCC 29366 / DSM 635 / J-10-fl) protein is Bacteriochlorophyll c-binding protein (cmsA).